We begin with the raw amino-acid sequence, 316 residues long: Protein U25 (316 aa).

The protein belongs to the herpesviridae US22 family.

The polypeptide is Protein U25 (U25) (Homo sapiens (Human)).